A 315-amino-acid chain; its full sequence is Methionyl-tRNA formyltransferase (315 aa).

A (6S)-5,6,7,8-tetrahydrofolate-binding site is contributed by 112–115 (SLLP).

Belongs to the Fmt family.

The catalysed reaction is L-methionyl-tRNA(fMet) + (6R)-10-formyltetrahydrofolate = N-formyl-L-methionyl-tRNA(fMet) + (6S)-5,6,7,8-tetrahydrofolate + H(+). In terms of biological role, attaches a formyl group to the free amino group of methionyl-tRNA(fMet). The formyl group appears to play a dual role in the initiator identity of N-formylmethionyl-tRNA by promoting its recognition by IF2 and preventing the misappropriation of this tRNA by the elongation apparatus. The sequence is that of Methionyl-tRNA formyltransferase from Leptospira interrogans serogroup Icterohaemorrhagiae serovar copenhageni (strain Fiocruz L1-130).